The primary structure comprises 756 residues: Nucleomorphin (756 aa).

Residues 1 to 10 (MDLDYSSDNS) are compositionally biased toward polar residues. The tract at residues 1 to 113 (MDLDYSSDNS…SQSNEDLSSS (113 aa)) is disordered. Composition is skewed to low complexity over residues 16 to 66 (NQNN…RPSS) and 75 to 94 (NNNN…NNNN). Residues 95–113 (GATISHPPTSQSNEDLSSS) are compositionally biased toward polar residues. One can recognise a BRCT domain in the interval 124–216 (LNSNIFENLG…ELLGVENYLV (93 aa)). Disordered stretches follow at residues 229–251 (NSSQ…INEQ), 272–298 (PSSL…LKSE), 359–403 (KIDL…NKNN), and 422–463 (TSST…LLNL). Low complexity-rich tracts occupy residues 285–298 (LQTQ…LKSE), 364–401 (NNNN…NKNK), and 422–432 (TSSTSSTLSSS). Over residues 448 to 459 (KSKKKFSQKKNH) the composition is skewed to basic residues. The short motif at 464 to 480 (KKSYQDPEIIAHSRPRK) is the Nuclear localization signal element. Residues 495 to 512 (ANYISNLDGFKYYARANK) are calmodulin binding. A compositionally biased stretch (polar residues) spans 514–529 (SLNSNATTSGGNNRSI). Residues 514 to 587 (SLNSNATTSG…SDEDDFDSDE (74 aa)) form a disordered region. Residues 536 to 587 (YDDEEEDEEDEDEEDEEEDEEEEEEEEEEEEDYDDEDLNDEESDEDDFDSDE) show a composition bias toward acidic residues. The segment at 537–588 (DDEEEDEEDEDEEDEEEDEEEEEEEEEEEEDYDDEDLNDEESDEDDFDSDED) is DEED region. Calmodulin binding stretches follow at residues 589-606 (VSRF…KIYK) and 596-613 (KLLQ…RFEH). Disordered stretches follow at residues 613–639 (HSRQ…SHSR) and 660–700 (LSPT…RTNI). Polar residues predominate over residues 668–691 (LSNQFHQDGGNNTTDGNLFNNFST).

In terms of assembly, interacts with calmodulin and CBPD1 in the presence of Ca(2+).

It localises to the nucleus. The sequence is that of Nucleomorphin (numA) from Dictyostelium discoideum (Social amoeba).